We begin with the raw amino-acid sequence, 904 residues long: MKQKKFNSKKSNRTDLSKRGDSPNIGISKSRTACKRCRLKKIKCDQEFPSCKRCAKLEVPCVSLDPATGKDVPRSYVFFLEDRLAVMMRVLKEYGVDPTKIRGNIPATSDDEPFDLKKYSSVSSLGEEGILPHNGLLADYLVQKGNSMASSAITSKSMASPQTINVQRKEFLVNSKKQDGSALLPETGSPMTSDARAEELRRCNKEISALGTMRESSFNSFLGDSSGISFAKLVFTATNFRQDSGDDVLDEDIKQREQKYNGYAEAENNPHFDPLELPPRHAAEVMISRFFVDTNSQLPLLHRELFLKKYFEPIYGPWNPNIALASDQTGINSAFEIPITSAFSAHTEPKRENVTEKIDVCSSVDVPWYDTWETSQKVNMRPIVELPTKFHIPYFFLNIIFAIGHATQVLKSDITTVATYKRRATKYIASLFSSSDRLEALAGTLLMVIYSIMRPNVPGVWYTMGSVLRLTVDLGLHSEKINKNYDAFTREIRRRLFWCVYSLDRQICSYFGRPFGIPEESITTRYPSLLDDSFITLTNREIDDYSDLPSPNPSSKVIALAMYKIRRIQASIVRILYAPGAELPRRFMDLESWRIETYNELERWFQVDVPKNFEMMNCKFNSIWFDLNYHYSKSILYGLSPKFPTLNDTAFKIVLDSTKGTIDVFYNLCVNKKIGYTWVAVHNMFMTGMTYLYVNFYSKNNINDCQEKVSEYTEKVLIVLKNLIGFCESAKTCYTSYKILSSVVIKLKFMQINDAKGIFSDSNPLTSQANRMSSYDKKTNVLGFDDGTFDNKVFNRTNFEEKAPFDIPLDEFFTELEKHSNVSQFNTLDVSEGNQVINESASTNTSSALNCQSYTNNQDIMDILFQVTSGSVWDEFFVRSGNGNEGESSYDISKGKNSESGGIF.

A compositionally biased stretch (basic residues) spans 1-11 (MKQKKFNSKKS). The segment at 1-27 (MKQKKFNSKKSNRTDLSKRGDSPNIGI) is disordered. The span at 12–21 (NRTDLSKRGD) shows a compositional bias: basic and acidic residues. The Zn(2+) site is built by Cys-34, Cys-37, Cys-44, Cys-51, Cys-54, and Cys-61. Residues 34–61 (CKRCRLKKIKCDQEFPSCKRCAKLEVPC) constitute a DNA-binding region (zn(2)-C6 fungal-type). The disordered stretch occupies residues 883–904 (GNEGESSYDISKGKNSESGGIF).

In terms of assembly, binds DNA as a homodimer.

It localises to the nucleus. Positive regulator of URA1 and URA3 expression. The chain is Pyrimidine pathway regulatory protein 1 (PPR1) from Saccharomyces cerevisiae (strain ATCC 204508 / S288c) (Baker's yeast).